A 619-amino-acid polypeptide reads, in one-letter code: Zinc finger protein 131 (619 aa).

One can recognise a BTB domain in the interval 34–98; sequence TDITLIVDGH…TYTAKLMIQG (65 aa). The short motif at 137–148 is the Nuclear localization signal 1 element; the sequence is TGKNEAKKRKIA. A Phosphoserine modification is found at Ser231. C2H2-type zinc fingers lie at residues 261-283, 288-311, and 328-350; these read FHCE…MKSH, FKCE…NCYH, and HICQ…LRKH. Glycyl lysine isopeptide (Lys-Gly) (interchain with G-Cter in SUMO2) cross-links involve residues Lys289 and Lys295. Positions 317–328 match the Nuclear localization signal 2 motif; sequence VSKKQRTGKKIH. The C2H2-type 4; degenerate zinc-finger motif lies at 356–381; the sequence is FECSNCHERFARNSTLKCHLTACQTG. 2 C2H2-type zinc fingers span residues 392–414 and 420–443; these read YECQ…LVIH and NHCT…SDAH. Basic and acidic residues-rich tracts occupy residues 574–587 and 595–612; these read QEER…AAME and LETK…ENDR. The disordered stretch occupies residues 574-619; that stretch reads QEEREPNHADAAMEEHEDAEGLETKPSEYSQARKTENDRTSLPVLE. Lys598 participates in a covalent cross-link: Glycyl lysine isopeptide (Lys-Gly) (interchain with G-Cter in SUMO).

It belongs to the krueppel C2H2-type zinc-finger protein family. Monosumoylated at Lys-598 by CBX4 and UHRF2. Sumoylation may potentiate ZNF131 inhibition of estrogen signaling. Sumoylation does not interfere with ubiquitination. Post-translationally, ubiquitinated. Ubiquitously expressed. Predominant expression is found in the developing central nervous system with strongest signals in the forebrain, midbrain, and hindbrain areas and in the neural tube.

The protein localises to the nucleus. In terms of biological role, may be involved in transcriptional regulation as a repressor of ESR1/ER-alpha signaling. Plays a role during development and organogenesis as well as in the function of the adult central nervous system. This chain is Zinc finger protein 131 (Znf131), found in Mus musculus (Mouse).